Reading from the N-terminus, the 130-residue chain is uncharacterized protein (130 aa).

The chain crosses the membrane as a helical span at residues 15–31 (LYLCPAIIRLSSVCTLA).

Its subcellular location is the membrane. This is an uncharacterized protein from Saccharomyces cerevisiae (strain ATCC 204508 / S288c) (Baker's yeast).